A 294-amino-acid chain; its full sequence is Energy-coupling factor transporter ATP-binding protein EcfA1 (294 aa).

The ABC transporter domain occupies 27–260; that stretch reads IEFENVYFAY…EERLLKMQLD (234 aa). Position 60 to 67 (60 to 67) interacts with ATP; that stretch reads GHNGSGKS.

It belongs to the ABC transporter superfamily. Energy-coupling factor EcfA family. Forms a stable energy-coupling factor (ECF) transporter complex composed of 2 membrane-embedded substrate-binding proteins (S component), 2 ATP-binding proteins (A component) and 2 transmembrane proteins (T component).

The protein localises to the cell membrane. ATP-binding (A) component of a common energy-coupling factor (ECF) ABC-transporter complex. Unlike classic ABC transporters this ECF transporter provides the energy necessary to transport a number of different substrates. The chain is Energy-coupling factor transporter ATP-binding protein EcfA1 from Ureaplasma parvum serovar 3 (strain ATCC 700970).